A 435-amino-acid chain; its full sequence is U-box domain-containing protein 36 (435 aa).

Positions 227–345 (EAEASKRKAR…LKGKREEEEA (119 aa)) form a coiled coil. Residues 352 to 426 (EPPQYFICPI…QEWLQLRELL (75 aa)) form the U-box domain.

It carries out the reaction S-ubiquitinyl-[E2 ubiquitin-conjugating enzyme]-L-cysteine + [acceptor protein]-L-lysine = [E2 ubiquitin-conjugating enzyme]-L-cysteine + N(6)-ubiquitinyl-[acceptor protein]-L-lysine.. Its pathway is protein modification; protein ubiquitination. Functions as an E3 ubiquitin ligase. In Arabidopsis thaliana (Mouse-ear cress), this protein is U-box domain-containing protein 36 (PUB36).